Consider the following 438-residue polypeptide: Tol-Pal system protein TolB (438 aa).

Residues 1–36 (MTPAFRRADLTGFLRTYGAALILLLAAMLAWQPAQA) form the signal peptide.

It belongs to the TolB family. In terms of assembly, the Tol-Pal system is composed of five core proteins: the inner membrane proteins TolA, TolQ and TolR, the periplasmic protein TolB and the outer membrane protein Pal. They form a network linking the inner and outer membranes and the peptidoglycan layer.

The protein resides in the periplasm. In terms of biological role, part of the Tol-Pal system, which plays a role in outer membrane invagination during cell division and is important for maintaining outer membrane integrity. The polypeptide is Tol-Pal system protein TolB (Bordetella pertussis (strain Tohama I / ATCC BAA-589 / NCTC 13251)).